The primary structure comprises 345 residues: Probable G-protein coupled receptor 139 (345 aa).

Residues 1-21 (MEHTHAHLAANSSACGLGFVP) are Extracellular-facing. A glycan (N-linked (GlcNAc...) asparagine) is linked at N11. A helical membrane pass occupies residues 22 to 42 (VVYYSFLLCLGLPANILTVII). The Cytoplasmic portion of the chain corresponds to 43-57 (LSQLVARRQKSSYNY). The helical transmembrane segment at 58 to 78 (LLALAAADILVLFFIVFVDFL) threads the bilayer. The Extracellular segment spans residues 79-94 (LEDFILTMQMPLIPDK). A helical transmembrane segment spans residues 95–115 (IIEVLEFSSIHTSIWITVPLT). Residues 116-140 (VDRYIAVCHPLKYHTVSYPARTRKV) lie on the Cytoplasmic side of the membrane. A helical membrane pass occupies residues 141 to 161 (ILSVYITCFLTSIPYYWWPNI). Topologically, residues 162-173 (WTEDYISTSMHH) are extracellular. A helical transmembrane segment spans residues 174-194 (VLVWIHCFTVYLVPCSIFFIL). Residues 195-220 (NSIIVYKLRRKSNFRLRGYSTGKTTA) are Cytoplasmic-facing. The chain crosses the membrane as a helical span at residues 221–241 (ILFTITSIFATLWAPRIIMIL). Over 242–260 (YHLYGAPIQNPWLVHIMLD) the chain is Extracellular. The chain crosses the membrane as a helical span at residues 261-281 (VANMLALLNTAINFFLYCFIS). Residues 282–345 (KRFRTMAAAT…KHGKPIKVSP (64 aa)) lie on the Cytoplasmic side of the membrane.

This sequence belongs to the G-protein coupled receptor 1 family. In terms of tissue distribution, expressed almost exclusively in the brain. Abundantly expressed in the ventrolateral region of caudate putamen, the habenular nucleus, the zona incerta, and the medial mammillary nucleus.

It localises to the cell membrane. In terms of biological role, orphan receptor. Seems to act through a G(q/11)-mediated pathway. The chain is Probable G-protein coupled receptor 139 (Gpr139) from Mus musculus (Mouse).